A 386-amino-acid polypeptide reads, in one-letter code: Queuine tRNA-ribosyltransferase (386 aa).

The active-site Proton acceptor is D99. Substrate-binding positions include 99-103 (DSGGF), D153, Q198, and G225. An RNA binding region spans residues 256 to 262 (GVGKPED). Residue D275 is the Nucleophile of the active site. Residues 280–284 (TRNAR) form an RNA binding; important for wobble base 34 recognition region. 4 residues coordinate Zn(2+): C313, C315, C318, and H344.

It belongs to the queuine tRNA-ribosyltransferase family. As to quaternary structure, homodimer. Within each dimer, one monomer is responsible for RNA recognition and catalysis, while the other monomer binds to the replacement base PreQ1. Requires Zn(2+) as cofactor.

The catalysed reaction is 7-aminomethyl-7-carbaguanine + guanosine(34) in tRNA = 7-aminomethyl-7-carbaguanosine(34) in tRNA + guanine. It participates in tRNA modification; tRNA-queuosine biosynthesis. In terms of biological role, catalyzes the base-exchange of a guanine (G) residue with the queuine precursor 7-aminomethyl-7-deazaguanine (PreQ1) at position 34 (anticodon wobble position) in tRNAs with GU(N) anticodons (tRNA-Asp, -Asn, -His and -Tyr). Catalysis occurs through a double-displacement mechanism. The nucleophile active site attacks the C1' of nucleotide 34 to detach the guanine base from the RNA, forming a covalent enzyme-RNA intermediate. The proton acceptor active site deprotonates the incoming PreQ1, allowing a nucleophilic attack on the C1' of the ribose to form the product. After dissociation, two additional enzymatic reactions on the tRNA convert PreQ1 to queuine (Q), resulting in the hypermodified nucleoside queuosine (7-(((4,5-cis-dihydroxy-2-cyclopenten-1-yl)amino)methyl)-7-deazaguanosine). The sequence is that of Queuine tRNA-ribosyltransferase from Acinetobacter baylyi (strain ATCC 33305 / BD413 / ADP1).